Reading from the N-terminus, the 1228-residue chain is Clustered mitochondria protein homolog (1228 aa).

In terms of domain architecture, Clu spans 298 to 557; sequence PSSLPSNSID…DNNPLDVGFA (260 aa). Residues 486–519 form a TPR 1 repeat; the sequence is CYGFDEASNKVIADAEFGSSLDDFAKVFHLKKHE. Residues 671–702 are a coiled coil; the sequence is LGRVIELAEQELEAQRALREAHLQQVEADNKE. TPR repeat units lie at residues 982 to 1015 and 1108 to 1141; these read AESY…YERV and AVNE…FSKE.

The protein belongs to the CLU family. As to quaternary structure, may associate with the eukaryotic translation initiation factor 3 (eIF-3) complex.

Its subcellular location is the cytoplasm. In terms of biological role, mRNA-binding protein involved in proper cytoplasmic distribution of mitochondria. This Eremothecium gossypii (strain ATCC 10895 / CBS 109.51 / FGSC 9923 / NRRL Y-1056) (Yeast) protein is Clustered mitochondria protein homolog.